The sequence spans 247 residues: AA9 family lytic polysaccharide monooxygenase A (247 aa).

A signal peptide spans 1–19; it reads MVRLASLAVLGSVIATASA. Cu(2+) is bound by residues His-20 and His-100. A disulfide bridge connects residues Cys-60 and Cys-185. His-165 lines the O2 pocket. A Cu(2+)-binding site is contributed by Tyr-182. Residue Asn-193 is glycosylated (N-linked (GlcNAc...) asparagine).

Belongs to the polysaccharide monooxygenase AA9 family. It depends on Cu(2+) as a cofactor.

Its subcellular location is the secreted. It catalyses the reaction [(1-&gt;4)-beta-D-glucosyl]n+m + reduced acceptor + O2 = 4-dehydro-beta-D-glucosyl-[(1-&gt;4)-beta-D-glucosyl]n-1 + [(1-&gt;4)-beta-D-glucosyl]m + acceptor + H2O.. Its function is as follows. Lytic polysaccharide monooxygenase (LPMO) that depolymerizes polysaccharides via the oxidation of scissile alpha- or beta-(1-4)-glycosidic bonds, yielding C4 oxidation products. Catalysis by LPMOs requires the reduction of the active-site copper from Cu(II) to Cu(I) by a reducing agent and H(2)O(2) or O(2) as a cosubstrate. Shows C4-oxidative cleavage of amorphous cellulose and soluble cello-oligosaccharides. Also active on xyloglucan, mixed-linkage beta-glucan, and glucomannan. Not active on crystalline forms of cellulose. Has higher affinity for linear substrates compared to branched substrates. Catalyzes a fast and specific peroxygenase reaction that is at least two orders of magnitude faster than the apparent monooxygenase reaction. This is AA9 family lytic polysaccharide monooxygenase A from Schizophyllum commune (strain H4-8 / FGSC 9210) (Split gill fungus).